Reading from the N-terminus, the 243-residue chain is DNA repair protein RecO (243 aa).

Belongs to the RecO family.

In terms of biological role, involved in DNA repair and RecF pathway recombination. This is DNA repair protein RecO from Bartonella quintana (strain Toulouse) (Rochalimaea quintana).